A 110-amino-acid chain; its full sequence is Tyrosine-protein phosphatase 3 (110 aa).

Residues 1–110 (QKCATIVMVT…NPPHSGPIVV (110 aa)) form the Tyrosine-protein phosphatase domain. Position 80 (aspartate 80) interacts with substrate.

This sequence belongs to the protein-tyrosine phosphatase family.

The catalysed reaction is O-phospho-L-tyrosyl-[protein] + H2O = L-tyrosyl-[protein] + phosphate. This is Tyrosine-protein phosphatase 3 (STY-3) from Styela plicata (Wrinkled sea squirt).